Here is a 164-residue protein sequence, read N- to C-terminus: Lipoprotein signal peptidase (164 aa).

3 helical membrane passes run 12 to 32 (WLWL…LILQ), 70 to 90 (WFFA…MYRL), and 102 to 122 (ALII…GFVV). Catalysis depends on residues aspartate 123 and aspartate 141. A helical transmembrane segment spans residues 137–157 (FNLADTAICVGAALIVLEGFL).

This sequence belongs to the peptidase A8 family.

The protein resides in the cell inner membrane. It catalyses the reaction Release of signal peptides from bacterial membrane prolipoproteins. Hydrolyzes -Xaa-Yaa-Zaa-|-(S,diacylglyceryl)Cys-, in which Xaa is hydrophobic (preferably Leu), and Yaa (Ala or Ser) and Zaa (Gly or Ala) have small, neutral side chains.. It participates in protein modification; lipoprotein biosynthesis (signal peptide cleavage). This protein specifically catalyzes the removal of signal peptides from prolipoproteins. The chain is Lipoprotein signal peptidase from Shigella boydii serotype 4 (strain Sb227).